The sequence spans 251 residues: Ubiquinone/menaquinone biosynthesis C-methyltransferase UbiE (251 aa).

S-adenosyl-L-methionine is bound by residues Thr-74, Asp-95, 123–124 (NA), and Ser-140.

This sequence belongs to the class I-like SAM-binding methyltransferase superfamily. MenG/UbiE family.

The enzyme catalyses a 2-demethylmenaquinol + S-adenosyl-L-methionine = a menaquinol + S-adenosyl-L-homocysteine + H(+). It catalyses the reaction a 2-methoxy-6-(all-trans-polyprenyl)benzene-1,4-diol + S-adenosyl-L-methionine = a 5-methoxy-2-methyl-3-(all-trans-polyprenyl)benzene-1,4-diol + S-adenosyl-L-homocysteine + H(+). The protein operates within quinol/quinone metabolism; menaquinone biosynthesis; menaquinol from 1,4-dihydroxy-2-naphthoate: step 2/2. Its pathway is cofactor biosynthesis; ubiquinone biosynthesis. Functionally, methyltransferase required for the conversion of demethylmenaquinol (DMKH2) to menaquinol (MKH2) and the conversion of 2-polyprenyl-6-methoxy-1,4-benzoquinol (DDMQH2) to 2-polyprenyl-3-methyl-6-methoxy-1,4-benzoquinol (DMQH2). The sequence is that of Ubiquinone/menaquinone biosynthesis C-methyltransferase UbiE from Yersinia pestis bv. Antiqua (strain Antiqua).